The sequence spans 280 residues: Probable S-methyl-5'-thioinosine phosphorylase (280 aa).

Residues threonine 8 and 50–51 (RH) each bind phosphate. Methionine 175 serves as a coordination point for substrate. Threonine 176 is a binding site for phosphate. Substrate is bound at residue 199–201 (NYA).

It belongs to the PNP/MTAP phosphorylase family. MTAP subfamily. In terms of assembly, homotrimer.

It carries out the reaction S-methyl-5'-thioinosine + phosphate = 5-(methylsulfanyl)-alpha-D-ribose 1-phosphate + hypoxanthine. It functions in the pathway purine metabolism; purine nucleoside salvage. Its function is as follows. Catalyzes the reversible phosphorylation of S-methyl-5'-thioinosine (MTI) to hypoxanthine and 5-methylthioribose-1-phosphate. Involved in the breakdown of S-methyl-5'-thioadenosine (MTA), a major by-product of polyamine biosynthesis. Catabolism of (MTA) occurs via deamination to MTI and phosphorolysis to hypoxanthine. The sequence is that of Probable S-methyl-5'-thioinosine phosphorylase from Methanothermobacter thermautotrophicus (strain ATCC 29096 / DSM 1053 / JCM 10044 / NBRC 100330 / Delta H) (Methanobacterium thermoautotrophicum).